The primary structure comprises 491 residues: Argininosuccinate lyase (491 aa).

This sequence belongs to the lyase 1 family. Argininosuccinate lyase subfamily.

It is found in the cytoplasm. It carries out the reaction 2-(N(omega)-L-arginino)succinate = fumarate + L-arginine. It participates in amino-acid biosynthesis; L-arginine biosynthesis; L-arginine from L-ornithine and carbamoyl phosphate: step 3/3. This chain is Argininosuccinate lyase, found in Methanosarcina barkeri (strain Fusaro / DSM 804).